Consider the following 252-residue polypeptide: E3 ubiquitin-protein ligase MARCHF3 (252 aa).

The segment at 62-122 (SSFNDHPMCR…ELCHFRFSVE (61 aa)) adopts an RING-CH-type zinc-finger fold. 8 residues coordinate Zn(2+): Cys70, Cys73, Cys86, Cys88, His96, Cys99, Cys112, and Cys115. 2 consecutive transmembrane segments (helical) span residues 144–164 (LFGDMVCFLFITPLATISGWL) and 181–201 (AVGLIALTVALFTIYLFWTLV).

It is found in the cytoplasmic vesicle membrane. The protein resides in the early endosome membrane. It catalyses the reaction S-ubiquitinyl-[E2 ubiquitin-conjugating enzyme]-L-cysteine + [acceptor protein]-L-lysine = [E2 ubiquitin-conjugating enzyme]-L-cysteine + N(6)-ubiquitinyl-[acceptor protein]-L-lysine.. The protein operates within protein modification; protein ubiquitination. Its function is as follows. E3 ubiquitin-protein ligase which may be involved in endosomal trafficking. E3 ubiquitin ligases accept ubiquitin from an E2 ubiquitin-conjugating enzyme in the form of a thioester and then directly transfer the ubiquitin to targeted substrates. This Xenopus laevis (African clawed frog) protein is E3 ubiquitin-protein ligase MARCHF3 (marchf3).